A 782-amino-acid polypeptide reads, in one-letter code: Protein NEDD1 (782 aa).

WD repeat units lie at residues Met1–Cys34, Ser41–Val80, Ser90–Lys130, Gly133–Glu172, Pro176–Ser216, Gln220–Cys260, Ala262–Thr301, and Ser307–Ala358. 2 disordered regions span residues Pro350–Gly393 and Pro467–Gly512. 3 stretches are compositionally biased toward polar residues: residues Pro352–Ala362, Val370–Arg386, and Ser488–Ser498. Residues Val753–Leu782 are a coiled coil.

Expressed in root meristematic cells.

It is found in the nucleus envelope. Its subcellular location is the chromosome. The protein localises to the centromere. It localises to the kinetochore. The protein resides in the cytoplasm. It is found in the cytoskeleton. Its subcellular location is the phragmoplast. The protein localises to the microtubule organizing center. Regulates microtubules organization in a centrosome-independent manner. Required for the spindle to be positioned correctly and for the function of gamma-tubulin in organizing phragmoplast microtubules. Component of active gamma-tubulin ring complexes (gamma-TuRCs) associated with cortical microtubules in interphase cells. Mediates gamma-TuRC recruitment to the nucleation sites and is important for determining the ratio of branched to parallel nucleation. May mediate the localization of GCP2 and GCP3 to the nuclear envelope. The sequence is that of Protein NEDD1 from Arabidopsis thaliana (Mouse-ear cress).